The following is a 194-amino-acid chain: MKEIILATSNPGKIKELEQLLAPTLCIPQADLGISDAEETGLSFIENAILKARHASSLANKPALADDSGLVVPSLNGEPGIYSARYAGIKANDENNIQQLLSKMADLSQEQRQAYFFCAIALMQHAKDPTPLIATGVFHGVISVKPSGTNGFGYDPVFYLNEYQCTAAELPAKIKNRISHRAKALNQLRALLPD.

Position 8 to 13 (8 to 13) interacts with substrate; sequence TSNPGK. Glutamate 38 and aspartate 67 together coordinate Mg(2+). Residue aspartate 67 is the Proton acceptor of the active site. Substrate-binding positions include serine 68, 152 to 155, lysine 175, and 180 to 181; these read FGYD and HR.

The protein belongs to the HAM1 NTPase family. As to quaternary structure, homodimer. Mg(2+) is required as a cofactor.

The catalysed reaction is XTP + H2O = XMP + diphosphate + H(+). The enzyme catalyses dITP + H2O = dIMP + diphosphate + H(+). It catalyses the reaction ITP + H2O = IMP + diphosphate + H(+). Its function is as follows. Pyrophosphatase that catalyzes the hydrolysis of nucleoside triphosphates to their monophosphate derivatives, with a high preference for the non-canonical purine nucleotides XTP (xanthosine triphosphate), dITP (deoxyinosine triphosphate) and ITP. Seems to function as a house-cleaning enzyme that removes non-canonical purine nucleotides from the nucleotide pool, thus preventing their incorporation into DNA/RNA and avoiding chromosomal lesions. The protein is dITP/XTP pyrophosphatase of Legionella pneumophila (strain Lens).